The following is a 930-amino-acid chain: Dual serine/threonine and tyrosine protein kinase (930 aa).

The stretch at 383–428 (RKENELYESLMNIANRKQEEMKDMIIETLSNMKEELLEDAANMEFK) forms a coiled coil. Residues 653-907 (PKLGRELGRG…PLLGIVQPML (255 aa)) enclose the Protein kinase domain. ATP-binding positions include 659–667 (LGRGQYGVV) and Lys-682. Catalysis depends on Asp-778, which acts as the Proton acceptor.

It belongs to the protein kinase superfamily. Ser/Thr protein kinase family. As to expression, widely expressed with the highest expression in brain and ovary.

It localises to the cytoplasm. The protein resides in the cell membrane. It is found in the apical cell membrane. The protein localises to the basolateral cell membrane. Its subcellular location is the cell junction. The enzyme catalyses L-seryl-[protein] + ATP = O-phospho-L-seryl-[protein] + ADP + H(+). It carries out the reaction L-threonyl-[protein] + ATP = O-phospho-L-threonyl-[protein] + ADP + H(+). The catalysed reaction is L-tyrosyl-[protein] + ATP = O-phospho-L-tyrosyl-[protein] + ADP + H(+). Functionally, may act as a positive regulator of ERK phosphorylation downstream of fibroblast growth factor-receptor activation. May induce both caspase-dependent apoptosis and caspase-independent cell death. This is Dual serine/threonine and tyrosine protein kinase (DSTYK) from Gallus gallus (Chicken).